A 153-amino-acid polypeptide reads, in one-letter code: Small ribosomal subunit protein bS16 (153 aa).

Basic and acidic residues predominate over residues 121–131; sequence AEAAAKAKAEA. The disordered stretch occupies residues 121-153; it reads AEAAAKAKAEAEAAAAAEEAPAEEAAEEAPAED. A compositionally biased stretch (acidic residues) spans 140-153; it reads APAEEAAEEAPAED.

The protein belongs to the bacterial ribosomal protein bS16 family.

The chain is Small ribosomal subunit protein bS16 from Bifidobacterium longum (strain DJO10A).